The primary structure comprises 171 residues: MAPQTKRAAETPKLGVQKAAVIAAAFLSAITAGAMANISMISVPVFMDTNTNPNHMIAQWSRTYHYGHIILPGICVGTCGLYAFSALRSNKNWRRYALAGITTLSLVPFTWVFMTPTNNTLFALEAAGNVSDLGYVQQLVVKWTWLHATRSMFPLIGAILGFTGIMADLER.

The next 3 helical transmembrane spans lie at 21–41 (VIAAAFLSAITAGAMANISMI), 67–87 (GHIILPGICVGTCGLYAFSAL), and 96–116 (YALAGITTLSLVPFTWVFMTP). N-linked (GlcNAc...) asparagine glycans are attached at residues Asn-118 and Asn-129. The helical transmembrane segment at 145 to 165 (WLHATRSMFPLIGAILGFTGI) threads the bilayer.

It belongs to the anthrone oxygenase family.

It localises to the membrane. It carries out the reaction emodin anthrone + O2 = emodin + H2O + H(+). It functions in the pathway secondary metabolite biosynthesis. Functionally, anthrone oxygenase; part of the gene cluster that mediates the biosynthesis of the dimeric xanthones cryptosporioptides. The pathway begins with the synthesis of atrochrysone thioester by the polyketide synthase dmx-nrPKS. The atrochrysone carboxyl ACP thioesterase dmxR1 then breaks the thioester bond and releases the atrochrysone carboxylic acid from dmx-nrPKS. Atrochrysone carboxylic acid is decarboxylated by the decarboxylase dmxR15, and oxidized by the anthrone oxygenase dmxR16 to yield emodin. Emodin is then reduced to emodin hydroquinone by the oxidoreductase dmxR7. A-ring reduction by the short chain dehydrogenase dmxR18, dehydration by the scytalone dehydratase-like protein dmxR17 and probable spontaneous re-oxidation, results in overall deoxygenation to chrysophanol. Baeyer-Villiger oxidation by the Baeyer-Villiger monooxygenase (BVMO) dmxR6 then yields monodictylactone in equilibrium with monodictyphenone. In the case of the cryptosporioptides biosynthesis, monodictylactone is reduced at C-12 to an alcohol (by the short chain dehydrogenases dmxR12 or dmxR8) and hydroxylated at C-5 by dmxR9, yielding the electron-rich aromatic which could eliminate H(2)O to form the ortho-quinonemethide, followed by tautomerisation to paraquinone and complete the formal reduction to produce the 10-methylgroup. Conjugate addition of C-4a-OH to the resulting paraquinone by the monooxygenase dmxR10 then gives cyclohexadienone, which is then reduced at C-5 by the short chain dehydrogenase dmxR3 to give the dihydroxanthone. The 6,7-epoxide in the cryptosporioptides could be introduced by the cytochrome P450 monooxygenase dmxL3. The highly reducing PKS dmxL2 manufactures butyrate, which is further carboxylated by dmxL1 to form ethylmalonate. It is not yet clear whether the carboxylation occurs while the butyrate is attached to the ACP of dmxL2, but this unusual fungal metabolite could then be esterified to O-5 by the O-acetyltransferase dmxR13. Finally, dimerization performed by dmxR5 gives the observed dimers cryptosporioptides A, B and C as the final products of the pathway. The protein is Anthrone oxygenase dmxR16 of Cryptosporiopsis sp. (strain 8999).